The sequence spans 240 residues: Glutamine transport ATP-binding protein GlnQ (240 aa).

Residues 2–236 form the ABC transporter domain; that stretch reads IEFKNVSKHF…PPSQRLQEFL (235 aa). Position 34 to 41 (34 to 41) interacts with ATP; it reads GPSGSGKS.

It belongs to the ABC transporter superfamily. In terms of assembly, heterotetramer with 2 subunits of GlnQ and 2 subunits of GlnP.

The protein resides in the cell inner membrane. In terms of biological role, part of the binding-protein-dependent transport system for glutamine. Probably responsible for energy coupling to the transport system. The chain is Glutamine transport ATP-binding protein GlnQ (glnQ) from Escherichia coli (strain K12).